The primary structure comprises 1416 residues: DNA-directed RNA polymerase subunit beta' (1416 aa).

The Zn(2+) site is built by C68, C70, C83, and C86. Mg(2+) contacts are provided by D458, D460, and D462. Positions 811, 884, 891, and 894 each coordinate Zn(2+).

The protein belongs to the RNA polymerase beta' chain family. In terms of assembly, the RNAP catalytic core consists of 2 alpha, 1 beta, 1 beta' and 1 omega subunit. When a sigma factor is associated with the core the holoenzyme is formed, which can initiate transcription. Requires Mg(2+) as cofactor. The cofactor is Zn(2+).

It catalyses the reaction RNA(n) + a ribonucleoside 5'-triphosphate = RNA(n+1) + diphosphate. In terms of biological role, DNA-dependent RNA polymerase catalyzes the transcription of DNA into RNA using the four ribonucleoside triphosphates as substrates. The sequence is that of DNA-directed RNA polymerase subunit beta' from Francisella philomiragia subsp. philomiragia (strain ATCC 25017 / CCUG 19701 / FSC 153 / O#319-036).